The following is a 528-amino-acid chain: Protein arginine N-methyltransferase 3 (528 aa).

The segment at 1–42 is disordered; that stretch reads MCSLAAGNGQGAELGPEPLELSDSGDDAGWEDEDADAEPAQG. An N-acetylcysteine modification is found at C2. S22 and S24 each carry phosphoserine. Residues 23-37 are compositionally biased toward acidic residues; sequence DSGDDAGWEDEDADA. The segment at 46-69 adopts a C2H2-type zinc-finger fold; the sequence is TPCLFCDRLFRSAEETFSHCKLEH. At S169 the chain carries Phosphoserine. The mediates interaction with ALDH1A1 stretch occupies residues 184-528; it reads MKQFAQDFVM…NSSTQTYSLQ (345 aa). An SAM-dependent MTase PRMT-type domain is found at 214 to 528; it reads DGVYFSSYGH…NSSTQTYSLQ (315 aa). Residues R236, G260, D282, S284, I310, and E311 each coordinate S-adenosyl-L-homocysteine. Catalysis depends on residues E326 and E335.

Belongs to the class I-like SAM-binding methyltransferase superfamily. Protein arginine N-methyltransferase family. In terms of assembly, monomer and homodimer. Interacts with EPB41L3 (via FERM domain); the interaction is direct and inhibits the protein-arginine N-methyltransferase activity of PRMT3. Interacts with the 40S ribosomal protein RPS2. Interacts with ALDH1A1; the interaction is direct, inhibits ALDH1A1 aldehyde dehydrogenase activity and is independent of the methyltransferase activity of PRMT3. Ubiquitously expressed.

Its subcellular location is the cytoplasm. It localises to the cytosol. The protein localises to the nucleus. The catalysed reaction is L-arginyl-[protein] + S-adenosyl-L-methionine = N(omega)-methyl-L-arginyl-[protein] + S-adenosyl-L-homocysteine + H(+). It carries out the reaction L-arginyl-[protein] + 2 S-adenosyl-L-methionine = N(omega),N(omega)-dimethyl-L-arginyl-[protein] + 2 S-adenosyl-L-homocysteine + 2 H(+). Inhibited by N-ethylmaleimide and high concentrations of zinc chloride. In terms of biological role, protein-arginine N-methyltransferase that catalyzes both the monomethylation and asymmetric dimethylation of the guanidino nitrogens of arginine residues in target proteins, and therefore falls into the group of type I methyltransferases. Catalyzes the asymmetric arginine dimethylation at multiple sites in the Arg/Gly-rich region of small ribosomal subunit protein uS5/RPS2. Also appears to methylate other ribosomal proteins. May regulate retinoic acid synthesis and signaling by inhibiting ALDH1A1 retinal dehydrogenase activity. Contributes to methylation of histone H4 'Arg-3', a specific tag for epigenetic transcriptional activation. Promotes osteogenesis. The protein is Protein arginine N-methyltransferase 3 of Rattus norvegicus (Rat).